A 100-amino-acid polypeptide reads, in one-letter code: Ubiquitin-related modifier 1 (100 aa).

At G100 the chain carries 1-thioglycine. Residue G100 forms a Glycyl lysine isopeptide (Gly-Lys) (interchain with K-? in acceptor proteins) linkage.

Belongs to the URM1 family. Post-translationally, C-terminal thiocarboxylation occurs in 2 steps, it is first acyl-adenylated (-COAMP) via the hesA/moeB/thiF part of UBA4, then thiocarboxylated (-COSH) via the rhodanese domain of UBA4.

Its subcellular location is the cytoplasm. Its pathway is tRNA modification; 5-methoxycarbonylmethyl-2-thiouridine-tRNA biosynthesis. Functionally, acts as a sulfur carrier required for 2-thiolation of mcm(5)S(2)U at tRNA wobble positions of cytosolic tRNA(Lys), tRNA(Glu) and tRNA(Gln). Serves as sulfur donor in tRNA 2-thiolation reaction by being thiocarboxylated (-COSH) at its C-terminus by the MOCS3 homolog UBA4. The sulfur is then transferred to tRNA to form 2-thiolation of mcm(5)S(2)U. Prior mcm(5) tRNA modification by the elongator complex is required for 2-thiolation. Also acts as a ubiquitin-like protein (UBL) that is covalently conjugated via an isopeptide bond to lysine residues of target proteins such as AHP1. The thiocarboxylated form serves as substrate for conjugation and oxidative stress specifically induces the formation of UBL-protein conjugates. In Eremothecium gossypii (strain ATCC 10895 / CBS 109.51 / FGSC 9923 / NRRL Y-1056) (Yeast), this protein is Ubiquitin-related modifier 1.